The primary structure comprises 237 residues: Phosphoribosylaminoimidazole-succinocarboxamide synthase (237 aa).

This sequence belongs to the SAICAR synthetase family.

It catalyses the reaction 5-amino-1-(5-phospho-D-ribosyl)imidazole-4-carboxylate + L-aspartate + ATP = (2S)-2-[5-amino-1-(5-phospho-beta-D-ribosyl)imidazole-4-carboxamido]succinate + ADP + phosphate + 2 H(+). It functions in the pathway purine metabolism; IMP biosynthesis via de novo pathway; 5-amino-1-(5-phospho-D-ribosyl)imidazole-4-carboxamide from 5-amino-1-(5-phospho-D-ribosyl)imidazole-4-carboxylate: step 1/2. The protein is Phosphoribosylaminoimidazole-succinocarboxamide synthase of Salmonella agona (strain SL483).